A 483-amino-acid chain; its full sequence is Acetyl-coenzyme A carboxylase carboxyl transferase subunit beta, chloroplastic (483 aa).

In terms of domain architecture, CoA carboxyltransferase N-terminal spans 221-483; sequence LWVQCENCYG…FQFHGFFPRP (263 aa). Positions 225, 228, 244, and 247 each coordinate Zn(2+). Residues 225–247 form a C4-type zinc finger; that stretch reads CENCYGLNYKKFFSSKMNICEQC.

The protein belongs to the AccD/PCCB family. Acetyl-CoA carboxylase is a heterohexamer composed of biotin carboxyl carrier protein, biotin carboxylase and 2 subunits each of ACCase subunit alpha and ACCase plastid-coded subunit beta (accD). Zn(2+) serves as cofactor.

The protein localises to the plastid. The protein resides in the chloroplast stroma. It carries out the reaction N(6)-carboxybiotinyl-L-lysyl-[protein] + acetyl-CoA = N(6)-biotinyl-L-lysyl-[protein] + malonyl-CoA. It functions in the pathway lipid metabolism; malonyl-CoA biosynthesis; malonyl-CoA from acetyl-CoA: step 1/1. Its function is as follows. Component of the acetyl coenzyme A carboxylase (ACC) complex. Biotin carboxylase (BC) catalyzes the carboxylation of biotin on its carrier protein (BCCP) and then the CO(2) group is transferred by the transcarboxylase to acetyl-CoA to form malonyl-CoA. The protein is Acetyl-coenzyme A carboxylase carboxyl transferase subunit beta, chloroplastic of Nuphar advena (Common spatterdock).